Consider the following 725-residue polypeptide: MVMKASVEDDDSGWELGMPDKMEKSNTDWVDITQDFEEACRELKLGELLHDKLFGLFEAMSAIEMMDPKMDAGMIGNQVNRKVLNFEQAIKDGTIKIKDLTSPELIGIMDTCFCCLITWLEGHSLAQTVFTCLYIHNPDFIEDPAMKAFALGILKICDIAREKVNKAAVFEEEDFQSMTYGFKMANSVTDLRVTGMLKDVEDDMQRRVKSTRSRQGEERDPEVELEHQQCLAVFSRVKFTRVLLTVLIAFTKKETSAVAEAQELMTQAADLLSAIHNSCIHGIQAQNDTTKGDHPIMMGFEPLVNQRLLPPTFPRYAKIIKREEMVNYFSKLIDRIKTVCEVVNLTNLHCILDFFCEFSEQSPCVLSRSLLQTTFLVDNKKVFGTHLMQDMVKDALRSFVSPPVLSPKCCLYNNHQAKDYIDSFVTHCVRPFCSLIQIHGHNRARQRDKLGHILEEFATLQDEAEKVDAALHSMLLKQEPQRQHLACLGTWVLYHNLRIMIQYLLSGFELELYSMHEYYYIYWYLSEFLYAWLMSTLSRADSSQMAEERIMEEQQKGRSSKKTKKKKKVRPLSREITMSQAYQNMCAGMYKTMIAFDMDGKVRKPKFELDSEQVRYEHRFAPFNSVITPPPVHYLQFKEMSDLNKYSPPPQSADLYMAASKHFQQAKMILENIPNPDHEVNRILKVAKPNIVVMKLLAGGHKKDSKVPPEFDFSPHKYFPVVKLV.

A disordered region spans residues 548–573 (ERIMEEQQKGRSSKKTKKKKKVRPLS). A compositionally biased stretch (basic residues) spans 558–571 (RSSKKTKKKKKVRP).

It belongs to the MAK10 family. In terms of assembly, component of the N-terminal acetyltransferase C (NatC) complex.

It localises to the cytoplasm. Functionally, auxillary component of the N-terminal acetyltransferase C (NatC) complex which catalyzes acetylation of N-terminal methionine residues. N-terminal acetylation protects proteins from ubiquitination and degradation by the N-end rule pathway. The chain is N-alpha-acetyltransferase 35, NatC auxiliary subunit (NAA35) from Gallus gallus (Chicken).